The primary structure comprises 105 residues: Large ribosomal subunit protein uL24 (105 aa).

The protein belongs to the universal ribosomal protein uL24 family. As to quaternary structure, part of the 50S ribosomal subunit.

Its function is as follows. One of two assembly initiator proteins, it binds directly to the 5'-end of the 23S rRNA, where it nucleates assembly of the 50S subunit. In terms of biological role, one of the proteins that surrounds the polypeptide exit tunnel on the outside of the subunit. The protein is Large ribosomal subunit protein uL24 of Thioalkalivibrio sulfidiphilus (strain HL-EbGR7).